Consider the following 327-residue polypeptide: cAMP-dependent protein kinase regulatory subunit (327 aa).

A disordered region spans residues 1–47; that stretch reads MTNNISHNQKATEKVEAQNNNNITRKRRGAISSEPLGDKPATPLPNI. Positions 1 to 65 are dimerization and phosphorylation; that stretch reads MTNNISHNQK…RLEQALSNNI (65 aa). The short motif at 27 to 31 is the Pseudophosphorylation motif element; that stretch reads RRGAI. A Phosphoserine modification is found at serine 32. 3',5'-cyclic AMP is bound by residues 66-188, glutamate 136, arginine 145, 189-327, glutamate 262, and arginine 271; these read MFSH…EKVS and ILRH…SQKS.

Belongs to the cAMP-dependent kinase regulatory chain family. In Dictyostelium the holoenzyme is a dimer composed of a regulatory (R) and a catalytic (C) subunit. In the presence of cAMP it dissociates into the active C subunit and an R monomer. In other eukaryotes the holoenzyme is a tetramer composed of 2 regulatory (R) and 2 catalytic (C) subunits. In the presence of cAMP it dissociates into active monomeric C subunits and an R dimer. Post-translationally, the pseudophosphorylation site binds to the substrate-binding region of the catalytic chain but is not phosphorylated. The physiological significance of phosphorylations by other kinases is unclear.

The sequence is that of cAMP-dependent protein kinase regulatory subunit (pkaR) from Dictyostelium discoideum (Social amoeba).